The chain runs to 196 residues: 3-isopropylmalate dehydratase small subunit (196 aa).

This sequence belongs to the LeuD family. LeuD type 1 subfamily. As to quaternary structure, heterodimer of LeuC and LeuD.

It carries out the reaction (2R,3S)-3-isopropylmalate = (2S)-2-isopropylmalate. Its pathway is amino-acid biosynthesis; L-leucine biosynthesis; L-leucine from 3-methyl-2-oxobutanoate: step 2/4. Catalyzes the isomerization between 2-isopropylmalate and 3-isopropylmalate, via the formation of 2-isopropylmaleate. This Streptococcus sanguinis (strain SK36) protein is 3-isopropylmalate dehydratase small subunit.